We begin with the raw amino-acid sequence, 512 residues long: Bifunctional purine biosynthesis protein PurH (512 aa).

The MGS-like domain occupies 1–150 (MIGEERVVRA…KNFPAVLVLV (150 aa)).

Belongs to the PurH family.

It catalyses the reaction (6R)-10-formyltetrahydrofolate + 5-amino-1-(5-phospho-beta-D-ribosyl)imidazole-4-carboxamide = 5-formamido-1-(5-phospho-D-ribosyl)imidazole-4-carboxamide + (6S)-5,6,7,8-tetrahydrofolate. The enzyme catalyses IMP + H2O = 5-formamido-1-(5-phospho-D-ribosyl)imidazole-4-carboxamide. The protein operates within purine metabolism; IMP biosynthesis via de novo pathway; 5-formamido-1-(5-phospho-D-ribosyl)imidazole-4-carboxamide from 5-amino-1-(5-phospho-D-ribosyl)imidazole-4-carboxamide (10-formyl THF route): step 1/1. It participates in purine metabolism; IMP biosynthesis via de novo pathway; IMP from 5-formamido-1-(5-phospho-D-ribosyl)imidazole-4-carboxamide: step 1/1. This Chloroflexus aurantiacus (strain ATCC 29366 / DSM 635 / J-10-fl) protein is Bifunctional purine biosynthesis protein PurH.